The sequence spans 450 residues: MSHSACPKPATARHSQALTGEIRIPGDKSISHRSFMFGGLASGKTRITGLLEGEDVINTGRAMQAMGARIRKEGDVWIINGVGNGCLLQPEAPLDFGNAGTGARLTMGLVGTYDMKTSFIGDASLSKRPMGRVLNPLREMGVQVEAAEGDRMPLTLIGPRTANPIAYRVPMASAQVKSAVLLAGLNTPGVTTVIEPVMTRDHTEKMLQDFGADLTVETDKDGVRHIRIVGQGKLTGQTIDVPGDPSSTAFPLVAALLVEGSEVTIRNVLMNPTRTGLILTLQEMGADIEIIDPRLAGGEDVADLRVKASKLKGVVVPPERAPSMIDEYPVLAIAASFAEGETVMDGLDELRVKESDRLAAVARGLEANGVDCTEGEMSLTVRGRPGGKGLGGGTVATHLDHRIAMSFLVMGLASEKPVTVDDSTMIATSFPEFMGMMAGLGAKIAESGAE.

Positions 28, 29, and 33 each coordinate 3-phosphoshikimate. Lys28 contacts phosphoenolpyruvate. Phosphoenolpyruvate contacts are provided by Gly100 and Arg128. The 3-phosphoshikimate site is built by Ser173, Gln175, Asp326, and Lys353. Phosphoenolpyruvate is bound at residue Gln175. The Proton acceptor role is filled by Asp326. Positions 357 and 402 each coordinate phosphoenolpyruvate.

The protein belongs to the EPSP synthase family. Monomer.

Its subcellular location is the cytoplasm. It catalyses the reaction 3-phosphoshikimate + phosphoenolpyruvate = 5-O-(1-carboxyvinyl)-3-phosphoshikimate + phosphate. The protein operates within metabolic intermediate biosynthesis; chorismate biosynthesis; chorismate from D-erythrose 4-phosphate and phosphoenolpyruvate: step 6/7. Functionally, catalyzes the transfer of the enolpyruvyl moiety of phosphoenolpyruvate (PEP) to the 5-hydroxyl of shikimate-3-phosphate (S3P) to produce enolpyruvyl shikimate-3-phosphate and inorganic phosphate. The polypeptide is 3-phosphoshikimate 1-carboxyvinyltransferase (Brucella abortus biovar 1 (strain 9-941)).